The following is a 336-amino-acid chain: Calcium-gated potassium channel MthK (336 aa).

Topologically, residues 1–20 (MVLVIEIIRKHLPRVLKVPA) are cytoplasmic. A helical transmembrane segment spans residues 21 to 41 (TRILLLVLAVIIYGTAGFHFI). The Extracellular segment spans residues 42-48 (EGESWTV). Residues 49 to 58 (SLYWTFVTIA) constitute an intramembrane region (helical; Pore-forming). An intramembrane region (pore-forming) is located at residues 59–64 (TVGYGD). The Selectivity filter signature appears at 59-64 (TVGYGD). Residues 65-69 (YSPST) are Extracellular-facing. A helical transmembrane segment spans residues 70 to 95 (PLGMYFTVTLIVLGIGTFAVAVERLL). Over 96 to 106 (EFLINREQMKL) the chain is Cytoplasmic. In terms of domain architecture, RCK N-terminal spans 115–230 (SRHVVICGWS…RMAGADQVIS (116 aa)). Aspartate 184, glutamate 210, and glutamate 212 together coordinate Ca(2+). In terms of domain architecture, RCK C-terminal spans 252 to 336 (VQDVLAEEST…IERLKNYISA (85 aa)).

In terms of assembly, homotetramer.

It localises to the cell membrane. In terms of biological role, calcium-gated potassium channel. This is Calcium-gated potassium channel MthK (mthK) from Methanothermobacter thermautotrophicus (strain ATCC 29096 / DSM 1053 / JCM 10044 / NBRC 100330 / Delta H) (Methanobacterium thermoautotrophicum).